Consider the following 509-residue polypeptide: Light-independent protochlorophyllide reductase subunit B (509 aa).

A [4Fe-4S] cluster-binding site is contributed by Asp-36. Asp-298 (proton donor) is an active-site residue. 433 to 434 provides a ligand contact to substrate; sequence GM.

Belongs to the ChlB/BchB/BchZ family. Protochlorophyllide reductase is composed of three subunits; ChlL, ChlN and ChlB. Forms a heterotetramer of two ChlB and two ChlN subunits. The cofactor is [4Fe-4S] cluster.

It is found in the plastid. The protein resides in the chloroplast. It carries out the reaction chlorophyllide a + oxidized 2[4Fe-4S]-[ferredoxin] + 2 ADP + 2 phosphate = protochlorophyllide a + reduced 2[4Fe-4S]-[ferredoxin] + 2 ATP + 2 H2O. The protein operates within porphyrin-containing compound metabolism; chlorophyll biosynthesis (light-independent). Its function is as follows. Component of the dark-operative protochlorophyllide reductase (DPOR) that uses Mg-ATP and reduced ferredoxin to reduce ring D of protochlorophyllide (Pchlide) to form chlorophyllide a (Chlide). This reaction is light-independent. The NB-protein (ChlN-ChlB) is the catalytic component of the complex. This chain is Light-independent protochlorophyllide reductase subunit B, found in Ephedra altissima (High-climbing jointfir).